The sequence spans 844 residues: Nitrogen permease regulator 3 (844 aa).

The first 21 residues, 1-21 (MSTNLPNSCLVQIALTVSTHS), serve as a signal peptide directing secretion. 2 disordered regions span residues 53-113 (EYTD…TFIN) and 246-310 (GRWK…DYEP). Residues 57-94 (SENNSSSDDYSSGLSDSELSTDYADCSSDASESSLDSL) are compositionally biased toward low complexity. Over residues 103 to 113 (VNSSTNNTFIN) the composition is skewed to polar residues. Residues 246-262 (GRWKKSKKRKQASKRSA) are compositionally biased toward basic residues. The segment covering 263–273 (RSSTARNSISR) has biased composition (low complexity). Residues 274–293 (NSVGRNSIGRNRSKTESQGH) show a composition bias toward polar residues. The segment covering 297-307 (VEEPADDENSD) has biased composition (acidic residues).

It belongs to the NPR3 family.

Functionally, mediates inactivation of the TORC1 complex in response to amino acid starvation. Required for meiotic nuclear division. The sequence is that of Nitrogen permease regulator 3 (NPR3) from Kluyveromyces lactis (strain ATCC 8585 / CBS 2359 / DSM 70799 / NBRC 1267 / NRRL Y-1140 / WM37) (Yeast).